A 323-amino-acid chain; its full sequence is Aquaporin-4 (323 aa).

The Cytoplasmic portion of the chain corresponds to 1-36; that stretch reads MSDGAAARRWGKCGPPCSRESIMVAFKGVWTQAFWK. S-palmitoyl cysteine attachment occurs at residues Cys13 and Cys17. A helical transmembrane segment spans residues 37-57; it reads AVTAEFLAMLIFVLLSVGSTI. Residues 58 to 69 lie on the Extracellular side of the membrane; the sequence is NWGGSENPLPVD. Residues 70–89 form a helical membrane-spanning segment; the sequence is MVLISLCFGLSIATMVQCFG. Residues 90-93 are Cytoplasmic-facing; the sequence is HISG. The discontinuously helical intramembrane region spans 94–101; that stretch reads GHINPAVT. The NPA 1 signature appears at 97 to 99; that stretch reads NPA. The Cytoplasmic portion of the chain corresponds to 102–115; the sequence is VAMVCTRKISIAKS. Position 111 is a phosphoserine; by PKG (Ser111). A helical transmembrane segment spans residues 116–136; sequence VFYITAQCLGAIIGAGILYLV. Topologically, residues 137-155 are extracellular; it reads TPPSVVGGLGVTTVHGNLT. Asn153 is a glycosylation site (N-linked (GlcNAc...) asparagine). Residues 156 to 176 form a helical membrane-spanning segment; that stretch reads AGHGLLVELIITFQLVFTIFA. The Cytoplasmic segment spans residues 177–184; the sequence is SCDSKRTD. Residue Ser180 is modified to Phosphoserine; by PKC. The chain crosses the membrane as a helical span at residues 185–205; sequence VTGSVALAIGFSVAIGHLFAI. The Extracellular segment spans residues 206–208; sequence NYT. The discontinuously helical intramembrane region spans 209–222; it reads GASMNPARSFGPAV. The NPA 2 motif lies at 213 to 215; that stretch reads NPA. Over 223 to 231 the chain is Extracellular; sequence IMGNWENHW. Residues 232 to 252 form a helical membrane-spanning segment; the sequence is IYWVGPIIGAVLAGALYEYVF. Residues 253–323 are Cytoplasmic-facing; it reads CPDVELKRRL…DSSGEVLSSV (71 aa). A phosphoserine mark is found at Ser276 and Ser285. Thr289 carries the post-translational modification Phosphothreonine. Ser321 carries the post-translational modification Phosphoserine.

This sequence belongs to the MIP/aquaporin (TC 1.A.8) family. Homotetramer. The tetramers can form oligomeric arrays in membranes. The size of the oligomers differs between tissues and is smaller in skeletal muscle than in brain. Interaction between AQP4 oligomeric arrays in close-by cells can contribute to cell-cell adhesion. Part of a complex containing MLC1, TRPV4, HEPACAM and ATP1B1. Post-translationally, phosphorylation by PKC at Ser-180 promotes internalization from the cell membrane, reducing the conductance by 50%. Phosphorylation by PKG at Ser-111 in response to glutamate increases conductance by 40%. Isoform Long: Palmitoylated on its N-terminal region. Isoform 3: Not palmitoylated. In terms of tissue distribution, detected in cerebellum. Detected on pericapillary astrocyte endfeet in cerebellum, and in skeletal muscle. Detected in glial lamellae in the hypothalamus (at protein level). Abundant in mature brain cortex, cerebellum and spinal cord. Highly expressed in the ependymal cell lining the aqueductal system and over the space of the brain in contact with the subarachnoid space. Detected in paraventricular and supraoptic nuclei, the granule cell layer of the dentate gyrus and the Purkinje cell layer in the cerebellum. Only weakly detectable in eye, kidney, intestine, and lung.

Its subcellular location is the cell membrane. It is found in the basolateral cell membrane. It localises to the endosome membrane. The protein resides in the sarcolemma. The protein localises to the cell projection. It carries out the reaction H2O(in) = H2O(out). Its function is as follows. Forms a water-specific channel. Plays an important role in brain water homeostasis and in glymphatic solute transport. Required for a normal rate of water exchange across the blood brain interface. Required for normal levels of cerebrospinal fluid influx into the brain cortex and parenchyma along paravascular spaces that surround penetrating arteries, and for normal drainage of interstitial fluid along paravenous drainage pathways. Thereby, it is required for normal clearance of solutes from the brain interstitial fluid, including soluble beta-amyloid peptides derived from APP. Plays a redundant role in urinary water homeostasis and urinary concentrating ability. The chain is Aquaporin-4 (Aqp4) from Rattus norvegicus (Rat).